A 130-amino-acid polypeptide reads, in one-letter code: Small ribosomal subunit protein uS11 (130 aa).

The protein belongs to the universal ribosomal protein uS11 family. In terms of assembly, part of the 30S ribosomal subunit. Interacts with proteins S7 and S18. Binds to IF-3.

Functionally, located on the platform of the 30S subunit, it bridges several disparate RNA helices of the 16S rRNA. Forms part of the Shine-Dalgarno cleft in the 70S ribosome. The polypeptide is Small ribosomal subunit protein uS11 (Alteromonas mediterranea (strain DSM 17117 / CIP 110805 / LMG 28347 / Deep ecotype)).